The primary structure comprises 1434 residues: Receptor-type tyrosine-protein phosphatase U (1434 aa).

An N-terminal signal peptide occupies residues 1–17; sequence MRSARALLLALALRVCA. Over 18-748 the chain is Extracellular; that stretch reads LDSETPSAGC…QHSEEMGLIL (731 aa). The 163-residue stretch at 25-187 folds into the MAM domain; sequence AGCTFEEDDD…ILLLNYPCSK (163 aa). N-linked (GlcNAc...) asparagine glycosylation occurs at asparagine 74. One can recognise an Ig-like C2-type domain in the interval 189–274; sequence PHFSRLGDVE…TQSSRGSGVS (86 aa). A disulfide bridge connects residues cysteine 209 and cysteine 263. Fibronectin type-III domains lie at 287–382, 385–483, 484–590, and 597–677; these read PIAP…CAEP, APKG…TDED, VPGG…SAPT, and PSPL…TEAK. Residue asparagine 409 is glycosylated (N-linked (GlcNAc...) asparagine). The N-linked (GlcNAc...) asparagine glycan is linked to asparagine 684. The helical transmembrane segment at 749–769 threads the bilayer; that stretch reads GICAGGLVVLIILLGAIIVVI. Over 770–1434 the chain is Cytoplasmic; sequence RKGKPVNMTK…LEYLESLETR (665 aa). Polar residues predominate over residues 824 to 839; it reads RGDQRSSVVNESSSLL. Positions 824 to 851 are disordered; sequence RGDQRSSVVNESSSLLGGSPRRQCGRKG. Tyrosine-protein phosphatase domains are found at residues 876–1132 and 1164–1427; these read KTAE…ILEA and LREE…ALEY. Residues glutamate 1041, 1073–1079, and glutamine 1117 each bind substrate; that span reads CSAGTGR. Cysteine 1073 (phosphocysteine intermediate) is an active-site residue. Cysteine 1368 (phosphocysteine intermediate) is an active-site residue.

Belongs to the protein-tyrosine phosphatase family. Receptor class 2B subfamily.

The protein resides in the cell junction. It is found in the cell membrane. The catalysed reaction is O-phospho-L-tyrosyl-[protein] + H2O = L-tyrosyl-[protein] + phosphate. Its function is as follows. Tyrosine-protein phosphatase which dephosphorylates CTNNB1. May function in cell proliferation and migration and play a role in the maintenance of epithelial integrity. This chain is Receptor-type tyrosine-protein phosphatase U (PTPRU), found in Gallus gallus (Chicken).